We begin with the raw amino-acid sequence, 25 residues long: Caerin-1.18 (25 aa).

A Leucine amide modification is found at Leu-25.

Expressed by the skin dorsal glands.

It is found in the secreted. Shows significant activity against Gram-positive organisms, but is less effective against Gram-negative organisms. This chain is Caerin-1.18, found in Ranoidea gracilenta (Dainty green tree frog).